Here is a 309-residue protein sequence, read N- to C-terminus: NADH-cytochrome b5 reductase 1 (309 aa).

Residues 31 to 51 (DWVVYSVALALALGTWKFFQL) traverse the membrane as a helical segment. In terms of domain architecture, FAD-binding FR-type spans 60–168 (TKFQEFELKE…RGPKGAFVYQ (109 aa)). FAD-binding positions include 148 to 163 (AGLS…GPKG) and 174 to 208 (HFGM…QVDL).

The protein belongs to the flavoprotein pyridine nucleotide cytochrome reductase family. In terms of assembly, monomer. Component of the 2-(3-amino-3-carboxypropyl)histidine synthase complex composed of DPH1, DPH2, DPH3 and a NADH-dependent reductase, predominantly CBR1. FAD serves as cofactor.

The protein resides in the mitochondrion outer membrane. It catalyses the reaction 2 Fe(III)-[cytochrome b5] + NADH = 2 Fe(II)-[cytochrome b5] + NAD(+) + H(+). It carries out the reaction 2 Fe(3+)-[Dph3] + NADH = 2 Fe(2+)-[Dph3] + NAD(+) + H(+). It functions in the pathway protein modification; peptidyl-diphthamide biosynthesis. Its function is as follows. NADH-dependent reductase for DPH3 and cytochrome b5. Required for the first step of diphthamide biosynthesis, a post-translational modification of histidine which occurs in elongation factor 2. DPH1 and DPH2 transfer a 3-amino-3-carboxypropyl (ACP) group from S-adenosyl-L-methionine (SAM) to a histidine residue, the reaction is assisted by a reduction system comprising DPH3 and a NADH-dependent reductase, predominantly CBR1. By reducing DPH3, also involved in the formation of the tRNA wobble base modification mcm5s 2U (5-methoxycarbonylmethyl-2-thiouridine), mediated by the elongator complex. The cytochrome b5/NADH cytochrome b5 reductase electron transfer system supports the catalytic activity of several sterol biosynthetic enzymes. In Pyricularia oryzae (strain 70-15 / ATCC MYA-4617 / FGSC 8958) (Rice blast fungus), this protein is NADH-cytochrome b5 reductase 1 (CBR1).